The sequence spans 72 residues: Translation initiation factor IF-1 (72 aa).

The S1-like domain occupies 1 to 72 (MAKEDVIEMQ…SKGRIVFRAR (72 aa)).

This sequence belongs to the IF-1 family. In terms of assembly, component of the 30S ribosomal translation pre-initiation complex which assembles on the 30S ribosome in the order IF-2 and IF-3, IF-1 and N-formylmethionyl-tRNA(fMet); mRNA recruitment can occur at any time during PIC assembly.

The protein resides in the cytoplasm. In terms of biological role, one of the essential components for the initiation of protein synthesis. Stabilizes the binding of IF-2 and IF-3 on the 30S subunit to which N-formylmethionyl-tRNA(fMet) subsequently binds. Helps modulate mRNA selection, yielding the 30S pre-initiation complex (PIC). Upon addition of the 50S ribosomal subunit IF-1, IF-2 and IF-3 are released leaving the mature 70S translation initiation complex. The chain is Translation initiation factor IF-1 from Pseudoalteromonas translucida (strain TAC 125).